Here is a 317-residue protein sequence, read N- to C-terminus: Acetyl-coenzyme A carboxylase carboxyl transferase subunit alpha (317 aa).

Residues 39-293 enclose the CoA carboxyltransferase C-terminal domain; it reads RLESKAAAAL…EEAIAEGLAG (255 aa).

This sequence belongs to the AccA family. As to quaternary structure, acetyl-CoA carboxylase is a heterohexamer composed of biotin carboxyl carrier protein (AccB), biotin carboxylase (AccC) and two subunits each of ACCase subunit alpha (AccA) and ACCase subunit beta (AccD).

It localises to the cytoplasm. The enzyme catalyses N(6)-carboxybiotinyl-L-lysyl-[protein] + acetyl-CoA = N(6)-biotinyl-L-lysyl-[protein] + malonyl-CoA. It functions in the pathway lipid metabolism; malonyl-CoA biosynthesis; malonyl-CoA from acetyl-CoA: step 1/1. Component of the acetyl coenzyme A carboxylase (ACC) complex. First, biotin carboxylase catalyzes the carboxylation of biotin on its carrier protein (BCCP) and then the CO(2) group is transferred by the carboxyltransferase to acetyl-CoA to form malonyl-CoA. In Methylobacterium sp. (strain 4-46), this protein is Acetyl-coenzyme A carboxylase carboxyl transferase subunit alpha.